A 214-amino-acid polypeptide reads, in one-letter code: MIITWMEEFGVLFVKAFLSLLAIMNPFSSVPVVISLMNEYSKEEIRVIALKASVYAFFILTFFLISGDLLFRFMGITLPAFKVGGGILLFLIALNLVQGEVTKEKGKAHEIEAALRRDNIALIPLAMPLLAGPGSITTVLVLRGYLNTLEGKVALFCAIFLSSFTAFVVYSLSTFFYRVLGRTGINLITRISGILLLAISVQFVVDGLKNLLKH.

6 helical membrane-spanning segments follow: residues phenylalanine 17–methionine 37, valine 47–glycine 67, phenylalanine 73–alanine 93, leucine 122–leucine 142, valine 153–serine 173, and isoleucine 185–valine 205.

Belongs to the UPF0056 (MarC) family.

Its subcellular location is the cell membrane. This Aquifex aeolicus (strain VF5) protein is UPF0056 membrane protein aq_540.